Reading from the N-terminus, the 359-residue chain is Acyl-CoA desaturase (359 aa).

Topologically, residues 1-72 (MPAHLLQEEI…EGPKPKLEYV (72 aa)) are cytoplasmic. A helical membrane pass occupies residues 73-93 (WRNIILMGLLHLGALYGITLI). Asn-75 lines the substrate pocket. Over 94–97 (PTCK) the chain is Lumenal. The helical transmembrane segment at 98–118 (IYTFLWVLFYYVISALGITAG) threads the bilayer. Residues 119-217 (VHRLWSHRTY…EKLVMFQRRY (99 aa)) lie on the Cytoplasmic side of the membrane. Residues His-120 and His-125 each coordinate Fe cation. The Histidine box-1 motif lies at 120 to 125 (HRLWSH). The substrate site is built by Asn-148, Arg-155, and Asp-156. Fe cation is bound by residues His-157, His-160, and His-161. The short motif at 157–161 (HRAHH) is the Histidine box-2 element. Residues Arg-188 and Lys-189 each coordinate substrate. The residue at position 203 (Ser-203) is a Phosphoserine. The helical transmembrane segment at 218–237 (YKPGVLLLCFILPTLVPWYL) threads the bilayer. Over 238–241 (WGES) the chain is Lumenal. The chain crosses the membrane as a helical span at residues 242-263 (FQNSLFFATFLRYAVVLNATWL). Position 262 (Trp-262) interacts with substrate. The Cytoplasmic portion of the chain corresponds to 264 to 359 (VNSAAHMYGY…RTGEESYKSG (96 aa)). Fe cation-binding residues include His-269, His-298, His-301, and His-302. The Histidine box-3 motif lies at 298-302 (HNYHH).

This sequence belongs to the fatty acid desaturase type 1 family. The cofactor is Fe(2+).

It localises to the endoplasmic reticulum membrane. It catalyses the reaction octadecanoyl-CoA + 2 Fe(II)-[cytochrome b5] + O2 + 2 H(+) = (9Z)-octadecenoyl-CoA + 2 Fe(III)-[cytochrome b5] + 2 H2O. Its function is as follows. Stearoyl-CoA desaturase that utilizes O(2) and electrons from reduced cytochrome b5 to introduce the first double bond into saturated fatty acyl-CoA substrates. Catalyzes the insertion of a cis double bond at the delta-9 position into fatty acyl-CoA substrates including palmitoyl-CoA and stearoyl-CoA. Gives rise to a mixture of 16:1 and 18:1 unsaturated fatty acids. Plays an important role in lipid biosynthesis. Plays an important role in regulating the expression of genes that are involved in lipogenesis and in regulating mitochondrial fatty acid oxidation. Plays an important role in body energy homeostasis. Contributes to the biosynthesis of membrane phospholipids, cholesterol esters and triglycerides. The chain is Acyl-CoA desaturase (SCD) from Ovis aries (Sheep).